The primary structure comprises 489 residues: Virion host shutoff protein (489 aa).

4 disordered regions span residues Glu110–Asn135, Ser142–Ala161, Arg285–Val319, and Gly332–Pro364. Residues Ile124–Ser134 are compositionally biased toward polar residues.

The protein belongs to the herpesviridae VHS protein family. As to quaternary structure, interacts with human EIF4H, EIF4A1 and EIF4A2; interaction with eIF4AI and EIF4A2 presumably allows Vhs protein to associate with the eIF4F cap-binding complex.

The protein localises to the virion. In terms of biological role, minor structural protein that acts as an endoribonuclease during lytic infection. Degrades host mRNAs in the cytoplasm by cutting them at preferred sites, including some in regions of translation initiation. Together with inhibition of host splicing by ICP27, contributes to an overall decrease in host protein synthesis. Also, after the onset of viral transcription, accelerates the turnover of viral mRNA, thereby facilitating the sequential expression of different classes of viral genes. Binds translation initiation factors eIF4H, eIF4AI, and eIF4AII, thereby may interact directly with the translation initiation complex and thus digest specifically mRNAs. Also impedes antigen presentation by major histocompatibility complex class I and class II molecules, inhibits secretion of cytokines that would otherwise recruit lymphocytes and neutrophils cells to the site of infection and blocks the activation of dendritic cells. Plays a role in the inhibition of interferon-beta activation by the cGAS/STING pathway. Mechanistically, down-regulates the expression of host cGAS/MB21D1. Also decreases the accumulation of other interferon-induced mRNAs such as host IFIT3 or CH25H to subvert their antiviral activity. This is Virion host shutoff protein (UL41) from Human herpesvirus 1 (strain 17) (HHV-1).